The chain runs to 345 residues: Probable velvet family sexual development regulator LACBIDRAFT_317102 (345 aa).

2 stretches are compositionally biased toward polar residues: residues 1–13 and 24–38; these read MFTT…SYRS and EIQN…NPPR. Disordered stretches follow at residues 1–43, 138–189, and 310–345; these read MFTT…TRRR, ESWT…SPSS, and RKRR…SDED. One can recognise a Velvet domain in the interval 62–306; that stretch reads GQTIRAELDE…ARWGVRLNIR (245 aa). 2 stretches are compositionally biased toward low complexity: residues 141 to 158 and 167 to 184; these read TSRS…PTLS and SSPQ…ASTP. Residues 336–345 show a composition bias toward acidic residues; sequence SEDDEASDED.

This sequence belongs to the velvet family.

Its subcellular location is the nucleus. Its function is as follows. Velvet-domain-containing protein that probably acts as a positive regulator of sexual development. The sequence is that of Probable velvet family sexual development regulator LACBIDRAFT_317102 from Laccaria bicolor (strain S238N-H82 / ATCC MYA-4686) (Bicoloured deceiver).